The primary structure comprises 263 residues: Kallikrein 1-related peptidase b27 (263 aa).

The first 17 residues, 1–17, serve as a signal peptide directing secretion; that stretch reads MRFLILFLALSLGGIDA. Residues 18–24 constitute a propeptide, activation peptide; sequence APPVQSR. The Peptidase S1 domain occupies 25–260; sequence IIGGFKCKKN…FTSWIKDTMA (236 aa). Disulfide bonds link cysteine 31–cysteine 175, cysteine 50–cysteine 66, cysteine 154–cysteine 221, cysteine 186–cysteine 200, and cysteine 211–cysteine 236. The Charge relay system role is filled by histidine 65. N-linked (GlcNAc...) asparagine glycans are attached at residues asparagine 69 and asparagine 105. Aspartate 122 serves as the catalytic Charge relay system. Residue serine 215 is the Charge relay system of the active site.

It belongs to the peptidase S1 family. Kallikrein subfamily. In terms of tissue distribution, expressed in testis and submaxillary gland. Not expressed in heart, brain, spleen, lung, liver, muscle, kidney and ovary. In the testis, expression localized specifically to Leydig cells in the interstitial tissues.

Strongly inhibited by protease inhibitors diisopropyl fluorophosphate, phenylmethanesulfonyl fluoride and SBTI. Serine protease with chymotrypsin-like cleavage specificity. Shows activity towards casein, gelatin, IGFBP3 and fibronectin but not towards laminin or collagens I and IV. Does not hydrolyze kininogin to release Lys-bradykinin. This is Kallikrein 1-related peptidase b27 (Klk1b27) from Mus musculus (Mouse).